Reading from the N-terminus, the 295-residue chain is Ethanolamine ammonia-lyase small subunit (295 aa).

Adenosylcob(III)alamin contacts are provided by Val207, Glu228, and Cys258.

The protein belongs to the EutC family. As to quaternary structure, the basic unit is a heterodimer which dimerizes to form tetramers. The heterotetramers trimerize; 6 large subunits form a core ring with 6 small subunits projecting outwards. Adenosylcob(III)alamin serves as cofactor.

The protein localises to the bacterial microcompartment. The catalysed reaction is ethanolamine = acetaldehyde + NH4(+). It functions in the pathway amine and polyamine degradation; ethanolamine degradation. In terms of biological role, catalyzes the deamination of various vicinal amino-alcohols to oxo compounds. Allows this organism to utilize ethanolamine as the sole source of nitrogen and carbon in the presence of external vitamin B12. The sequence is that of Ethanolamine ammonia-lyase small subunit from Escherichia coli (strain SMS-3-5 / SECEC).